A 442-amino-acid chain; its full sequence is Cyclic adenylate deaminase (442 aa).

This sequence belongs to the metallo-dependent hydrolases superfamily. Adenosine and AMP deaminases family. It depends on Zn(2+) as a cofactor.

It catalyses the reaction 3',5'-cyclic AMP + H2O + H(+) = 3',5'-cyclic IMP + NH4(+). Its function is as follows. Deaminates cAMP into cIMP, thereby repressing cAMP dependent metabolism or genes. This chain is Cyclic adenylate deaminase (add), found in Leptospira interrogans serogroup Icterohaemorrhagiae serovar copenhageni (strain Fiocruz L1-130).